The sequence spans 206 residues: MKRPVLIGITGGTGSGKSTVAKEIYNKFDEACIAMIEQDSYYKDQSSIPFEERCKKNYDHPDAFDNELLINHLKNLVDLNVIEKPIYDFEAHNRKEETIKVEPRDIIIVEGILVLQDPKVRELLDIKIYVDTDADVRIIRRLLRDINERGRTVDSVINQYLTVVRPMHMQFIEPSKRYADIIIPEGGHNRVAVDMMVANIKHLLQK.

Gly11 to Ser18 is a binding site for ATP.

This sequence belongs to the uridine kinase family.

The protein resides in the cytoplasm. It catalyses the reaction uridine + ATP = UMP + ADP + H(+). The enzyme catalyses cytidine + ATP = CMP + ADP + H(+). Its pathway is pyrimidine metabolism; CTP biosynthesis via salvage pathway; CTP from cytidine: step 1/3. It functions in the pathway pyrimidine metabolism; UMP biosynthesis via salvage pathway; UMP from uridine: step 1/1. This Clostridium botulinum (strain Okra / Type B1) protein is Uridine kinase.